The following is a 213-amino-acid chain: Large ribosomal subunit protein uL3 (213 aa).

Glutamine 151 carries the N5-methylglutamine modification.

It belongs to the universal ribosomal protein uL3 family. Part of the 50S ribosomal subunit. Forms a cluster with proteins L14 and L19. Methylated by PrmB.

One of the primary rRNA binding proteins, it binds directly near the 3'-end of the 23S rRNA, where it nucleates assembly of the 50S subunit. In Allorhizobium ampelinum (strain ATCC BAA-846 / DSM 112012 / S4) (Agrobacterium vitis (strain S4)), this protein is Large ribosomal subunit protein uL3.